The sequence spans 260 residues: Phosphate import ATP-binding protein PstB 1 (260 aa).

One can recognise an ABC transporter domain in the interval 13 to 255 (VRVRDLNLWY…PHTKKAEDYI (243 aa)). Residue 45–52 (GPSGCGKS) participates in ATP binding.

This sequence belongs to the ABC transporter superfamily. Phosphate importer (TC 3.A.1.7) family. The complex is composed of two ATP-binding proteins (PstB), two transmembrane proteins (PstC and PstA) and a solute-binding protein (PstS).

It localises to the cell inner membrane. It carries out the reaction phosphate(out) + ATP + H2O = ADP + 2 phosphate(in) + H(+). Its function is as follows. Part of the ABC transporter complex PstSACB involved in phosphate import. Responsible for energy coupling to the transport system. This Chromohalobacter salexigens (strain ATCC BAA-138 / DSM 3043 / CIP 106854 / NCIMB 13768 / 1H11) protein is Phosphate import ATP-binding protein PstB 1.